The primary structure comprises 108 residues: Parvalbumin beta (108 aa).

EF-hand domains are found at residues 38–73 (KPTDQVKKVFDILDQDKSGYIEEDELQLFLKNFCSS) and 77–108 (LSNAETKAFLFAGDSDGDGKIGVDEFQALVRS). Positions 51, 53, 55, 57, 59, 62, 90, 92, 94, 96, and 101 each coordinate Ca(2+).

The protein belongs to the parvalbumin family.

Functionally, in muscle, parvalbumin is thought to be involved in relaxation after contraction. It binds two calcium ions. The polypeptide is Parvalbumin beta (Amphiuma means (Salamander)).